Here is a 189-residue protein sequence, read N- to C-terminus: Endoribonuclease YbeY (189 aa).

The Zn(2+) site is built by histidine 146, histidine 150, and histidine 156.

Belongs to the endoribonuclease YbeY family. Zn(2+) serves as cofactor.

It localises to the cytoplasm. Functionally, single strand-specific metallo-endoribonuclease involved in late-stage 70S ribosome quality control and in maturation of the 3' terminus of the 16S rRNA. The polypeptide is Endoribonuclease YbeY (Prochlorococcus marinus (strain MIT 9211)).